The sequence spans 314 residues: Homoserine O-acetyltransferase (314 aa).

The Acyl-thioester intermediate role is filled by C142. Residues K163 and S192 each contribute to the substrate site. Residue H235 is the Proton acceptor of the active site. E237 is a catalytic residue. R249 contacts substrate.

Belongs to the MetA family.

It localises to the cytoplasm. It catalyses the reaction L-homoserine + acetyl-CoA = O-acetyl-L-homoserine + CoA. It participates in amino-acid biosynthesis; L-methionine biosynthesis via de novo pathway; O-acetyl-L-homoserine from L-homoserine: step 1/1. Its function is as follows. Transfers an acetyl group from acetyl-CoA to L-homoserine, forming acetyl-L-homoserine. The protein is Homoserine O-acetyltransferase of Streptococcus pneumoniae serotype 4 (strain ATCC BAA-334 / TIGR4).